The sequence spans 275 residues: AA9 family lytic polysaccharide monooxygenase AA9-X282 (275 aa).

Positions 1–17 are cleaved as a signal peptide; that stretch reads MFTKLIIAASLAASVAA. Residue His18 coordinates Cu(2+). At Thr20 the chain carries Phosphothreonine. 2 positions are modified to phosphoserine: Ser43 and Ser49. Thr50 carries the phosphothreonine modification. Ser58 carries the post-translational modification Phosphoserine. An intrachain disulfide couples Cys66 to Cys185. Cu(2+) is bound at residue His96. Ser130 is subject to Phosphoserine. His171 and Gln180 together coordinate O2. Cu(2+) is bound at residue Tyr182. The interval 236–265 is X282 extension; the sequence is TSPAVANTPYPTTATWNTALQPSTVPTAVP. A 9res motif motif is present at residues 268–275; it reads GTPGIGKA.

The protein belongs to the polysaccharide monooxygenase AA9 family. Requires Cu(2+) as cofactor.

Its subcellular location is the secreted. It catalyses the reaction [(1-&gt;4)-beta-D-glucosyl]n+m + reduced acceptor + O2 = 4-dehydro-beta-D-glucosyl-[(1-&gt;4)-beta-D-glucosyl]n-1 + [(1-&gt;4)-beta-D-glucosyl]m + acceptor + H2O.. Its function is as follows. Lytic polysaccharide monooxygenase (LPMO) that depolymerizes crystalline and amorphous polysaccharides via the oxidation of scissile alpha- or beta-(1-4)-glycosidic bonds, yielding C1 oxidation products. Catalysis by LPMOs requires the reduction of the active-site copper from Cu(II) to Cu(I) by a reducing agent and H(2)O(2) or O(2) as a cosubstrate. Shows only weak binding properties to cellulose, and low cellulolytic oxidative activity which questions the involvement of X282 extension-containing AA9 proteins in the degradation of plant cell wall and opens new avenues as to the divergence of function of some AA9 members. This Trametes coccinea (strain BRFM310) (Pycnoporus coccineus) protein is AA9 family lytic polysaccharide monooxygenase AA9-X282.